The chain runs to 77 residues: Acyl carrier protein (77 aa).

Residues alanine 2–glutamine 77 enclose the Carrier domain. Residue serine 37 is modified to O-(pantetheine 4'-phosphoryl)serine.

It belongs to the acyl carrier protein (ACP) family. 4'-phosphopantetheine is transferred from CoA to a specific serine of apo-ACP by AcpS. This modification is essential for activity because fatty acids are bound in thioester linkage to the sulfhydryl of the prosthetic group.

It localises to the cytoplasm. Its pathway is lipid metabolism; fatty acid biosynthesis. In terms of biological role, carrier of the growing fatty acid chain in fatty acid biosynthesis. In Shouchella clausii (strain KSM-K16) (Alkalihalobacillus clausii), this protein is Acyl carrier protein.